We begin with the raw amino-acid sequence, 168 residues long: S-ribosylhomocysteine lyase (168 aa).

Residues H54, H58, and C128 each coordinate Fe cation.

The protein belongs to the LuxS family. Homodimer. It depends on Fe cation as a cofactor.

It carries out the reaction S-(5-deoxy-D-ribos-5-yl)-L-homocysteine = (S)-4,5-dihydroxypentane-2,3-dione + L-homocysteine. Its function is as follows. Involved in the synthesis of autoinducer 2 (AI-2) which is secreted by bacteria and is used to communicate both the cell density and the metabolic potential of the environment. The regulation of gene expression in response to changes in cell density is called quorum sensing. Catalyzes the transformation of S-ribosylhomocysteine (RHC) to homocysteine (HC) and 4,5-dihydroxy-2,3-pentadione (DPD). This is S-ribosylhomocysteine lyase from Histophilus somni (strain 129Pt) (Haemophilus somnus).